The following is a 276-amino-acid chain: RNA-binding protein pno-1 (276 aa).

2 disordered regions span residues 1-30 (MATS…VPST) and 62-101 (DVVM…SRVV). Acidic residues predominate over residues 8 to 27 (FDDEFPMEEGMPELLDDEDV). Positions 197–249 (GDHVSRAIGRIAGKDGRTKLVIENTTKTRIVVANTKIHILGAYQNLKLARNAV) constitute a KH domain.

Belongs to the PNO1 family. Part of the small subunit (SSU) processome, composed of more than 70 proteins and the RNA chaperone small nucleolar RNA (snoRNA) U3.

It localises to the nucleus. It is found in the nucleolus. In terms of biological role, part of the small subunit (SSU) processome, first precursor of the small eukaryotic ribosomal subunit. During the assembly of the SSU processome in the nucleolus, many ribosome biogenesis factors, an RNA chaperone and ribosomal proteins associate with the nascent pre-rRNA and work in concert to generate RNA folding, modifications, rearrangements and cleavage as well as targeted degradation of pre-ribosomal RNA by the RNA exosome. Positively regulates dimethylation of two adjacent adenosines in the loop of a conserved hairpin near the 3'-end of 18S rRNA. This Caenorhabditis briggsae protein is RNA-binding protein pno-1.